A 252-amino-acid polypeptide reads, in one-letter code: MMLHAQNMPGQSGMPWLVFLHGFSGDCREWQPVGEQFHTCSRLYIDLPGHGGSAAIPVGGFADVFQLLRATLISYNILKFWLVGYSLGGRVAMMAACQGIPGLCGLVVEGGHPGLQNEQARAERRLSDGRWAERFRREPLSTVFHDWYQQSVFTSLTAQQRQALTALRSQNNGETLAAMLEATSLAAQPDLREALNALTFPFYYLCGERDSKFRALAQEVAATCHVIRNAGHNAHRENPAGVVDSLAQILRL.

It belongs to the AB hydrolase superfamily. MenH family. As to quaternary structure, monomer.

The catalysed reaction is 5-enolpyruvoyl-6-hydroxy-2-succinyl-cyclohex-3-ene-1-carboxylate = (1R,6R)-6-hydroxy-2-succinyl-cyclohexa-2,4-diene-1-carboxylate + pyruvate. It participates in quinol/quinone metabolism; 1,4-dihydroxy-2-naphthoate biosynthesis; 1,4-dihydroxy-2-naphthoate from chorismate: step 3/7. It functions in the pathway quinol/quinone metabolism; menaquinone biosynthesis. Its function is as follows. Catalyzes a proton abstraction reaction that results in 2,5-elimination of pyruvate from 2-succinyl-5-enolpyruvyl-6-hydroxy-3-cyclohexene-1-carboxylate (SEPHCHC) and the formation of 2-succinyl-6-hydroxy-2,4-cyclohexadiene-1-carboxylate (SHCHC). The protein is 2-succinyl-6-hydroxy-2,4-cyclohexadiene-1-carboxylate synthase of Salmonella arizonae (strain ATCC BAA-731 / CDC346-86 / RSK2980).